Here is a 299-residue protein sequence, read N- to C-terminus: Pectin lyase (299 aa).

The signal sequence occupies residues 1–18 (MKFSTFVSLGLTAITALA). Low complexity-rich tracts occupy residues 82–91 (RSAATSPSSD) and 232–246 (SASAQATSTTTTTRT). Disordered regions lie at residues 82–105 (RSAATSPSSDRTARSCLRTSPSPS) and 227–246 (SRGRPSASAQATSTTTTTRT).

This sequence belongs to the polysaccharide lyase 1 family.

Its subcellular location is the secreted. The catalysed reaction is Eliminative cleavage of (1-&gt;4)-alpha-D-galacturonan methyl ester to give oligosaccharides with 4-deoxy-6-O-methyl-alpha-D-galact-4-enuronosyl groups at their non-reducing ends.. This Peyronellaea pinodes (Pea foot rot fungus) protein is Pectin lyase (PELA).